The sequence spans 517 residues: Maturase K (517 aa).

This sequence belongs to the intron maturase 2 family. MatK subfamily.

The protein localises to the plastid. Its subcellular location is the chloroplast. Usually encoded in the trnK tRNA gene intron. Probably assists in splicing its own and other chloroplast group II introns. The chain is Maturase K from Acer pseudoplatanus (Sycamore maple).